A 122-amino-acid chain; its full sequence is Large ribosomal subunit protein uL14 (122 aa).

The protein belongs to the universal ribosomal protein uL14 family. As to quaternary structure, part of the 50S ribosomal subunit. Forms a cluster with proteins L3 and L19. In the 70S ribosome, L14 and L19 interact and together make contacts with the 16S rRNA in bridges B5 and B8.

Its function is as follows. Binds to 23S rRNA. Forms part of two intersubunit bridges in the 70S ribosome. The protein is Large ribosomal subunit protein uL14 of Geobacillus thermodenitrificans (strain NG80-2).